The chain runs to 346 residues: Methylthioribose-1-phosphate isomerase (346 aa).

Residues 46 to 48 (RGA), Arg89, and Gln196 contribute to the substrate site. The Proton donor role is filled by Asp237. Residue 247 to 248 (NK) coordinates substrate.

The protein belongs to the eIF-2B alpha/beta/delta subunits family. MtnA subfamily.

The enzyme catalyses 5-(methylsulfanyl)-alpha-D-ribose 1-phosphate = 5-(methylsulfanyl)-D-ribulose 1-phosphate. The protein operates within amino-acid biosynthesis; L-methionine biosynthesis via salvage pathway; L-methionine from S-methyl-5-thio-alpha-D-ribose 1-phosphate: step 1/6. Its function is as follows. Catalyzes the interconversion of methylthioribose-1-phosphate (MTR-1-P) into methylthioribulose-1-phosphate (MTRu-1-P). The protein is Methylthioribose-1-phosphate isomerase of Trichlorobacter lovleyi (strain ATCC BAA-1151 / DSM 17278 / SZ) (Geobacter lovleyi).